Consider the following 352-residue polypeptide: Nuclear receptor subfamily 1 group I member 3 (352 aa).

Residues 8–83 (LRNCVVCGDQ…AGMRKDMILS (76 aa)) constitute a DNA-binding region (nuclear receptor). The segment at 11 to 31 (CVVCGDQATGYHFNALTCEGC) adopts an NR C4-type zinc-finger fold. Residue threonine 38 is modified to Phosphothreonine; by PKC. Residues 47–71 (CPFAGSCEVSKTQRRHCPACRLQKC) form an NR C4-type zinc finger. Residues 109–352 (EQEELIRTLL…MMPLLQEICS (244 aa)) enclose the NR LBD domain.

This sequence belongs to the nuclear hormone receptor family. NR1 subfamily. In terms of assembly, interacts with ECT2. Heterodimer of NR1I3 and RXR. Interacts with PSMC4. Directly interacts with DNAJC7. The DNAJC7-NR1I3 complex may also include HSP90. Interacts with CRY1. Interacts with CRY2 in a ligand-dependent manner. Post-translationally, phosphorylated at Thr-38 by PKC, dephosphorylation of Thr-38 is required for nuclear translocation and activation. As to expression, predominantly expressed in liver.

It localises to the nucleus. The protein resides in the cytoplasm. Its subcellular location is the cytoskeleton. Functionally, binds and transactivates the retinoic acid response elements that control expression of the retinoic acid receptor beta 2 and alcohol dehydrogenase 3 genes. Transactivates both the phenobarbital responsive element module of the human CYP2B6 gene and the CYP3A4 xenobiotic response element. This is Nuclear receptor subfamily 1 group I member 3 (NR1I3) from Homo sapiens (Human).